We begin with the raw amino-acid sequence, 259 residues long: UPF0246 protein PSHAa2558 (259 aa).

Belongs to the UPF0246 family.

In Pseudoalteromonas translucida (strain TAC 125), this protein is UPF0246 protein PSHAa2558.